The chain runs to 634 residues: 1-deoxy-D-xylulose-5-phosphate synthase (634 aa).

Residues histidine 79 and 120-122 each bind thiamine diphosphate; that span reads GHA. Mg(2+) is bound at residue aspartate 151. Residues 152-153, asparagine 180, tyrosine 292, and glutamate 376 each bind thiamine diphosphate; that span reads GS. Mg(2+) is bound at residue asparagine 180.

It belongs to the transketolase family. DXPS subfamily. In terms of assembly, homodimer. The cofactor is Mg(2+). Thiamine diphosphate is required as a cofactor.

The enzyme catalyses D-glyceraldehyde 3-phosphate + pyruvate + H(+) = 1-deoxy-D-xylulose 5-phosphate + CO2. Its pathway is metabolic intermediate biosynthesis; 1-deoxy-D-xylulose 5-phosphate biosynthesis; 1-deoxy-D-xylulose 5-phosphate from D-glyceraldehyde 3-phosphate and pyruvate: step 1/1. Catalyzes the acyloin condensation reaction between C atoms 2 and 3 of pyruvate and glyceraldehyde 3-phosphate to yield 1-deoxy-D-xylulose-5-phosphate (DXP). This is 1-deoxy-D-xylulose-5-phosphate synthase from Porphyromonas gingivalis (strain ATCC BAA-308 / W83).